The following is a 92-amino-acid chain: MARSVWKGPFLDGYMLGKADKARASGRNEVIKIWSRRSTILPQFVGLTFGVYNGQKFIPVLVTENMIGHKFGEFSPTRTFYGHAVDKKAKRK.

This sequence belongs to the universal ribosomal protein uS19 family.

Its function is as follows. Protein S19 forms a complex with S13 that binds strongly to the 16S ribosomal RNA. The chain is Small ribosomal subunit protein uS19 from Paramagnetospirillum magneticum (strain ATCC 700264 / AMB-1) (Magnetospirillum magneticum).